Reading from the N-terminus, the 547-residue chain is Glucose-6-phosphate isomerase 2 (547 aa).

Catalysis depends on Glu-351, which acts as the Proton donor. Residues His-382 and Lys-508 contribute to the active site.

The protein belongs to the GPI family.

Its subcellular location is the cytoplasm. It catalyses the reaction alpha-D-glucose 6-phosphate = beta-D-fructose 6-phosphate. The protein operates within carbohydrate biosynthesis; gluconeogenesis. Its pathway is carbohydrate degradation; glycolysis; D-glyceraldehyde 3-phosphate and glycerone phosphate from D-glucose: step 2/4. Its function is as follows. Catalyzes the reversible isomerization of glucose-6-phosphate to fructose-6-phosphate. The chain is Glucose-6-phosphate isomerase 2 from Neisseria meningitidis serogroup B (strain ATCC BAA-335 / MC58).